The primary structure comprises 456 residues: Senecionine N-oxygenase (456 aa).

Positions 1–22 (MFRKFVIMLVLSLLVAAGISQA) are cleaved as a signal peptide. 32 to 37 (GAGYSG) contributes to the FAD binding site. 215–220 (GAGPSG) provides a ligand contact to NADP(+).

It belongs to the FMO family. In terms of assembly, homotetramer. Requires FAD as cofactor. Hemolymph.

The protein localises to the secreted. The catalysed reaction is senecionine + NADPH + O2 = senecionine N-oxide + NADP(+) + H2O. NADPH-dependent monooxygenase that detoxifies senecionine and similar plant alkaloids that are ingested by the larvae. Is active towards a narrow range of related substrates with highest activity towards senecionine, followed by seneciphylline, retrorsine, monocrotaline, senecivernine, axillarine and axillaridine. The polypeptide is Senecionine N-oxygenase (sno1) (Tyria jacobaeae (Cinnabar moth)).